We begin with the raw amino-acid sequence, 308 residues long: Putative mitochondrial transporter UCP3 (308 aa).

Residues 1–10 (MVGLQPSEVP) lie on the Mitochondrial intermembrane side of the membrane. A helical transmembrane segment spans residues 11–32 (PTTVVKFLGAGTAACFADLLTF). Solcar repeat units follow at residues 11-102 (PTTV…VKQF), 111-202 (SSVA…IKEK), and 211-296 (DNFP…LKRA). Over 33–73 (PLDTAKVRLQIQGENPGAQSVQYRGVLGTILTMVRTEGPRS) the chain is Mitochondrial matrix. Residues 74–96 (PYSGLVAGLHRQMSFASIRIGLY) traverse the membrane as a helical segment. Over 97–116 (DSVKQFYTPKGADHSSVAIR) the chain is Mitochondrial intermembrane. The chain crosses the membrane as a helical span at residues 117 to 133 (ILAGCTTGAMAVTCAQP). The Mitochondrial matrix segment spans residues 134-179 (TDVVKVRFQAMIRLGTGGERKYRGTMDAYRTIAREEGVRGLWKGTW). A helical membrane pass occupies residues 180–196 (PNITRNAIVNCAEMVTY). Over 197-213 (DIIKEKLLESHLFTDNF) the chain is Mitochondrial intermembrane. A helical membrane pass occupies residues 214 to 233 (PCHFVSAFGAGFCATVVASP). The Mitochondrial matrix segment spans residues 234–267 (VDVVKTRYMNAPLGRYRSPLHCMLKMVAQEGPTA). The helical transmembrane segment at 268–290 (FYKGFVPSFLRLGAWNVMMFVTY) threads the bilayer. The tract at residues 275 to 297 (SFLRLGAWNVMMFVTYEQLKRAL) is purine nucleotide binding. Topologically, residues 291-308 (EQLKRALMKVQVLRESPF) are mitochondrial intermembrane.

This sequence belongs to the mitochondrial carrier (TC 2.A.29) family. As to quaternary structure, interacts with HAX1; the interaction is direct and calcium-dependent.

The protein localises to the mitochondrion inner membrane. With respect to regulation, inhibited by purine nucleotides and inorganic phosphate (in vitro). Its function is as follows. Putative transmembrane transporter that plays a role in mitochondrial metabolism via an as yet unclear mechanism. Originally, this mitochondrial protein was thought to act as a proton transmembrane transporter from the mitochondrial intermembrane space into the matrix, causing proton leaks through the inner mitochondrial membrane, thereby uncoupling mitochondrial membrane potential generation from ATP synthesis. However, this function is controversial and uncoupling may not be the function, or at least not the main function, but rather a consequence of more conventional metabolite transporter activity. The protein is Putative mitochondrial transporter UCP3 of Mus musculus (Mouse).